A 327-amino-acid polypeptide reads, in one-letter code: Cyclic AMP-responsive element-binding protein 1 (327 aa).

Disordered regions lie at residues 1 to 27 and 94 to 113; these read MTME…QMTV and SEDS…RREI. Positions 87–146 constitute a KID domain; it reads QISTIAESEDSQESVDSVTDSQKRREILSRRPSYRKILNDLSSDAPGVPRIEEEKSEEET. Ser-119 carries the phosphoserine; by CaMK1, CaMK2, CaMK4, PKB/AKT1 or PKB/AKT2, RPS6KA3, RPS6KA4, RPS6KA5 and SGK1 modification. Lys-122 participates in a covalent cross-link: Glycyl lysine isopeptide (Lys-Gly) (interchain with G-Cter in SUMO2). The segment at 126–151 is disordered; sequence DLSSDAPGVPRIEEEKSEEETSAPAI. Position 128 is a phosphoserine; by CaMK2 (Ser-128). Ser-257 carries the phosphoserine; by HIPK2 modification. In terms of domain architecture, bZIP spans 269-327; that stretch reads ARKREVRLMKNREAARECRRKKKEYVKCLENRVAVLENQNKTLIEELKALKDLYCHKSD. The segment at 270-295 is basic motif; it reads RKREVRLMKNREAARECRRKKKEYVK. Residues Lys-271 and Lys-290 each participate in a glycyl lysine isopeptide (Lys-Gly) (interchain with G-Cter in SUMO1) cross-link. Positions 297–318 are leucine-zipper; the sequence is LENRVAVLENQNKTLIEELKAL.

Belongs to the bZIP family. In terms of assembly, interacts with PPRC1. Binds DNA as a dimer. This dimer is stabilized by magnesium ions. Interacts, through the bZIP domain, with the coactivators CRTC1/TORC1, CRTC2/TORC2 and CRTC3/TORC3. Interacts (phosphorylated form) with TOX3. When phosphorylated on Ser-119, binds CREBBP. Interacts with ARRB1. Binds to HIPK2. Interacts with SGK1. Interacts with CREBL2; regulates CREB1 phosphorylation, stability and transcriptional activity. Interacts with TSSK4; this interaction facilitates phosphorylation on Ser-119. Forms a complex with KMT2A and CREBBP. Interacts with TOX4; CREB1 is required for full induction of TOX4-dependent activity and the interaction is increased by cAMP and inhibited by insulin. In terms of processing, phosphorylation of Ser-119 allows CREBBP binding. Stimulated by phosphorylation. Phosphorylated Ser-128 can be detected in the suprachiasmatic nucleus (SCN), the amygdala, the cortex, and the hippocampus but not in the striatum nor in the cerebellum. In the SCN, phosphorylation of Ser-128 and Ser-119 are stimulated by light exposure and submitted to circadian oscillations. In the retina, only phosphorylation of Ser-119 can be detected upon light exposure. Phosphorylation of both Ser-119 and Ser-128 in the SCN regulates the activity of CREB and participates in circadian rhythm generation. Phosphorylated upon calcium influx by CaMK4 and CaMK2 on Ser-119. CaMK4 is much more potent than CAMK2 in activating CREB. Phosphorylated by CaMK2 on Ser-128. Phosphorylation of Ser-128 blocks CREB-mediated transcription even when Ser-119 is phosphorylated. Phosphorylated by CaMK1. Phosphorylation of Ser-271 by HIPK2 in response to genotoxic stress promotes CREB1 activity, facilitating the recruitment of the coactivator CBP. Phosphorylated at Ser-119 by RPS6KA3, RPS6KA4 and RPS6KA5 in response to mitogenic or stress stimuli. CREBL2 positively regulates phosphorylation at Ser-119 thereby stimulating CREB1 transcriptional activity. In liver, phosphorylation is induced by fasting or glucagon in a circadian fashion. Phosphorylated by TSSK4 on Ser-119. Post-translationally, sumoylated with SUMO1. Sumoylation on Lys-290, but not on Lys-271, is required for nuclear localization of this protein. Sumoylation is enhanced under hypoxia, promoting nuclear localization and stabilization. In terms of tissue distribution, expressed in the heart (at protein level).

The protein localises to the nucleus. Its function is as follows. Phosphorylation-dependent transcription factor that stimulates transcription upon binding to the DNA cAMP response element (CRE), a sequence present in many viral and cellular promoters. Transcription activation is enhanced by the TORC coactivators which act independently of Ser-119 phosphorylation. Involved in different cellular processes including the synchronization of circadian rhythmicity and the differentiation of adipose cells. Regulates the expression of apoptotic and inflammatory response factors in cardiomyocytes in response to ERFE-mediated activation of AKT signaling. In Mus musculus (Mouse), this protein is Cyclic AMP-responsive element-binding protein 1 (Creb1).